Reading from the N-terminus, the 192-residue chain is MKNKLVVVTGVPGVGGTTITQKAMEKLSEEGINYKMVNFGTVMFEVAQEENLVEDRDQMRKLDPDTQKRIQKLAGRKIAEMVKESPVVVDTHSTIKTPKGYLPGLPVWVLNELNPDIIIVVETSGDEILIRRLNDETRNRDLETTAGIEEHQIMNRAAAMTYGVLTGATVKIIQNKNNLLDYAVEELISVLR.

10–18 (GVPGVGGTT) serves as a coordination point for ATP.

The protein belongs to the archaeal adenylate kinase family. In terms of assembly, monomer.

The protein resides in the cytoplasm. It carries out the reaction AMP + ATP = 2 ADP. The protein is Adenylate kinase (adkA) of Methanothermococcus thermolithotrophicus (Methanococcus thermolithotrophicus).